The following is a 477-amino-acid chain: P3 protein (477 aa).

Residues Met1–Gly21 are disordered. The next 8 membrane-spanning stretches (helical) occupy residues Pro225 to Ala245, Ala253 to Phe273, Val281 to Leu301, Val320 to Ile340, Val361 to Val381, Leu383 to Leu403, Val417 to Leu437, and Phe450 to Tyr470.

The protein belongs to the bile acid:sodium symporter (BASS) (TC 2.A.28) family.

The protein resides in the membrane. Its function is as follows. The ubiquitous expression and the conservation of the sequence in distant animal species suggest that the gene codes for a protein with housekeeping functions. The polypeptide is P3 protein (SLC10A3) (Bos taurus (Bovine)).